Reading from the N-terminus, the 137-residue chain is FAD synthase (137 aa).

ATP is bound by residues 5–6, 10–13, and D88; these read TF and HPGH.

The protein belongs to the archaeal FAD synthase family. Homodimer. The cofactor is a divalent metal cation.

It catalyses the reaction FMN + ATP + H(+) = FAD + diphosphate. It functions in the pathway cofactor biosynthesis; FAD biosynthesis; FAD from FMN: step 1/1. In terms of biological role, catalyzes the transfer of the AMP portion of ATP to flavin mononucleotide (FMN) to produce flavin adenine dinucleotide (FAD) coenzyme. The sequence is that of FAD synthase from Archaeoglobus fulgidus (strain ATCC 49558 / DSM 4304 / JCM 9628 / NBRC 100126 / VC-16).